The following is a 557-amino-acid chain: Phosphomethylpyrimidine synthase (557 aa).

Residues N197, M226, Y255, H291, 311-313 (SRG), 352-355 (DGLR), and E391 each bind substrate. H395 contacts Zn(2+). Position 418 (Y418) interacts with substrate. Residue H459 participates in Zn(2+) binding. [4Fe-4S] cluster-binding residues include C539, C542, and C547.

This sequence belongs to the ThiC family. As to quaternary structure, homodimer. [4Fe-4S] cluster is required as a cofactor.

It carries out the reaction 5-amino-1-(5-phospho-beta-D-ribosyl)imidazole + S-adenosyl-L-methionine = 4-amino-2-methyl-5-(phosphooxymethyl)pyrimidine + CO + 5'-deoxyadenosine + formate + L-methionine + 3 H(+). It participates in cofactor biosynthesis; thiamine diphosphate biosynthesis. Its function is as follows. Catalyzes the synthesis of the hydroxymethylpyrimidine phosphate (HMP-P) moiety of thiamine from aminoimidazole ribotide (AIR) in a radical S-adenosyl-L-methionine (SAM)-dependent reaction. The sequence is that of Phosphomethylpyrimidine synthase from Anaplasma phagocytophilum (strain HZ).